The chain runs to 651 residues: BTB/POZ domain-containing protein At3g44820 (651 aa).

A BTB domain is found at 25-96 (SDITVVVDDV…CYGARVDITS (72 aa)). Residues 211 to 509 (DWWYEDISYL…LQVLFFEQMH (299 aa)) form the NPH3 domain. A disordered region spans residues 611-651 (DAKNDTVQNSVSSTPRSATADHTLPRSSRHSKHRKSFSFFG). Over residues 615-627 (DTVQNSVSSTPRS) the composition is skewed to polar residues. Positions 637 to 651 (SSRHSKHRKSFSFFG) are enriched in basic residues.

The protein belongs to the NPH3 family.

It functions in the pathway protein modification; protein ubiquitination. Its function is as follows. May act as a substrate-specific adapter of an E3 ubiquitin-protein ligase complex (CUL3-RBX1-BTB) which mediates the ubiquitination and subsequent proteasomal degradation of target proteins. The chain is BTB/POZ domain-containing protein At3g44820 from Arabidopsis thaliana (Mouse-ear cress).